A 433-amino-acid polypeptide reads, in one-letter code: Trigger factor (433 aa).

The 86-residue stretch at 163 to 248 (GDVVVLDFAA…VHAVKERRLP (86 aa)) folds into the PPIase FKBP-type domain.

Belongs to the FKBP-type PPIase family. Tig subfamily.

It is found in the cytoplasm. The catalysed reaction is [protein]-peptidylproline (omega=180) = [protein]-peptidylproline (omega=0). In terms of biological role, involved in protein export. Acts as a chaperone by maintaining the newly synthesized protein in an open conformation. Functions as a peptidyl-prolyl cis-trans isomerase. The polypeptide is Trigger factor (Nitratidesulfovibrio vulgaris (strain ATCC 29579 / DSM 644 / CCUG 34227 / NCIMB 8303 / VKM B-1760 / Hildenborough) (Desulfovibrio vulgaris)).